A 184-amino-acid polypeptide reads, in one-letter code: MEEERRLRGRLSRRRPPAGGGPPNCRPWFLSEESKSEPWAALLRSTVGGNTDWTPNSQPLPPLPAFPSQESLPDPESTVPPEVFTVGSKTFSWTPFPPALRGSGSSCRLLRCPEGSPGSPAPSLKGCPALDSRQTPSTQECVQSQLVLLNCPLCQKAFDPKLTQLDVDSHLAQCLAESTEDVVW.

2 disordered regions span residues 1–30 and 46–81; these read MEEE…PWFL and TVGG…TVPP. Residues 7 to 16 are compositionally biased toward basic residues; the sequence is LRGRLSRRRP. A compositionally biased stretch (polar residues) spans 47 to 57; it reads VGGNTDWTPNS. A Phosphoserine modification is found at Ser-119. The UBZ2-type zinc finger occupies 148–184; it reads LLNCPLCQKAFDPKLTQLDVDSHLAQCLAESTEDVVW. Residues Cys-151, Cys-154, His-170, and Cys-174 each contribute to the Zn(2+) site.

In terms of assembly, component of the Fanconi anemia (FA) complex. Interacts with FANCA; interaction is direct. Interacts with REV1.

The protein resides in the nucleus. It localises to the chromosome. Functionally, component of the Fanconi anemia (FA) complex required to recruit the FA complex to DNA interstrand cross-links (ICLs) and promote ICLs repair. Following DNA damage recognizes and binds 'Lys-63'-linked ubiquitin generated by RNF8 at ICLs and recruits other components of the FA complex. Promotes translesion synthesis via interaction with REV1. This chain is Fanconi anemia core complex-associated protein 20, found in Rattus norvegicus (Rat).